Here is a 324-residue protein sequence, read N- to C-terminus: Beta-ketoacyl-[acyl-carrier-protein] synthase III (324 aa).

Residues C112 and H251 contribute to the active site. The tract at residues 252–256 is ACP-binding; sequence QANLR. Residue N281 is part of the active site.

This sequence belongs to the thiolase-like superfamily. FabH family. In terms of assembly, homodimer.

Its subcellular location is the cytoplasm. It catalyses the reaction malonyl-[ACP] + acetyl-CoA + H(+) = 3-oxobutanoyl-[ACP] + CO2 + CoA. The protein operates within lipid metabolism; fatty acid biosynthesis. Its function is as follows. Catalyzes the condensation reaction of fatty acid synthesis by the addition to an acyl acceptor of two carbons from malonyl-ACP. Catalyzes the first condensation reaction which initiates fatty acid synthesis and may therefore play a role in governing the total rate of fatty acid production. Possesses both acetoacetyl-ACP synthase and acetyl transacylase activities. Its substrate specificity determines the biosynthesis of branched-chain and/or straight-chain of fatty acids. This Clostridium perfringens (strain 13 / Type A) protein is Beta-ketoacyl-[acyl-carrier-protein] synthase III.